The chain runs to 333 residues: Quinolinate synthase (333 aa).

Iminosuccinate contacts are provided by histidine 41 and serine 58. Cysteine 103 contacts [4Fe-4S] cluster. Iminosuccinate-binding positions include 129 to 131 (YIN) and serine 146. Position 189 (cysteine 189) interacts with [4Fe-4S] cluster. Iminosuccinate contacts are provided by residues 215 to 217 (HPE) and threonine 232. [4Fe-4S] cluster is bound at residue cysteine 282.

The protein belongs to the quinolinate synthase family. Type 2 subfamily. [4Fe-4S] cluster is required as a cofactor.

It localises to the cytoplasm. The enzyme catalyses iminosuccinate + dihydroxyacetone phosphate = quinolinate + phosphate + 2 H2O + H(+). The protein operates within cofactor biosynthesis; NAD(+) biosynthesis; quinolinate from iminoaspartate: step 1/1. Functionally, catalyzes the condensation of iminoaspartate with dihydroxyacetone phosphate to form quinolinate. This Prochlorococcus marinus (strain MIT 9303) protein is Quinolinate synthase.